The sequence spans 293 residues: Bifunctional protein FolD (293 aa).

NADP(+) contacts are provided by residues 169–171 (GRG), Thr-196, and Val-237.

This sequence belongs to the tetrahydrofolate dehydrogenase/cyclohydrolase family. As to quaternary structure, homodimer.

It catalyses the reaction (6R)-5,10-methylene-5,6,7,8-tetrahydrofolate + NADP(+) = (6R)-5,10-methenyltetrahydrofolate + NADPH. The enzyme catalyses (6R)-5,10-methenyltetrahydrofolate + H2O = (6R)-10-formyltetrahydrofolate + H(+). It participates in one-carbon metabolism; tetrahydrofolate interconversion. Catalyzes the oxidation of 5,10-methylenetetrahydrofolate to 5,10-methenyltetrahydrofolate and then the hydrolysis of 5,10-methenyltetrahydrofolate to 10-formyltetrahydrofolate. The chain is Bifunctional protein FolD from Leifsonia xyli subsp. xyli (strain CTCB07).